Here is a 389-residue protein sequence, read N- to C-terminus: Transmembrane protease serine 11A (389 aa).

The Cytoplasmic portion of the chain corresponds to 1-23; sequence MEVAGYGTHNRDLKQWMVTLLSA. The helical; Signal-anchor for type II membrane protein transmembrane segment at 24–44 threads the bilayer; the sequence is LSLMMVVVTIGLLALFLVFDI. Residues 31–148 enclose the SEA domain; that stretch reads VTIGLLALFL…SLVQVKDCGK (118 aa). Topologically, residues 45–389 are extracellular; it reads QVNSNSGQKS…RHWIASKTGL (345 aa). The region spanning 158–388 is the Peptidase S1 domain; the sequence is IVSGNPAAKG…YRHWIASKTG (231 aa). An intrachain disulfide couples Cys183 to Cys199. Catalysis depends on charge relay system residues His198 and Asp243. Asn274 is a glycosylation site (N-linked (GlcNAc...) asparagine). 2 disulfides stabilise this stretch: Cys308–Cys324 and Cys335–Cys364. The Charge relay system role is filled by Ser339.

This sequence belongs to the peptidase S1 family.

It is found in the membrane. Its function is as follows. Probable serine protease which may play a role in cellular senescence. Overexpression inhibits cell growth and induce G1 cell cycle arrest. The sequence is that of Transmembrane protease serine 11A (Tmprss11a) from Mus musculus (Mouse).